Consider the following 155-residue polypeptide: Endoribonuclease YbeY (155 aa).

Residues 64–84 are disordered; that stretch reads SFPMDEMRAPGDDEDPPSGLL. Zn(2+) is bound by residues His115, His119, and His125.

This sequence belongs to the endoribonuclease YbeY family. Zn(2+) serves as cofactor.

The protein localises to the cytoplasm. Functionally, single strand-specific metallo-endoribonuclease involved in late-stage 70S ribosome quality control and in maturation of the 3' terminus of the 16S rRNA. The chain is Endoribonuclease YbeY from Cutibacterium acnes (strain DSM 16379 / KPA171202) (Propionibacterium acnes).